The following is a 248-amino-acid chain: MKSYIEPFIASKALSQNSQKAYRYDLQQFCQLVGERVNQDKLLLYQNSIANLSLSAKKRKLSTANQFLYYLYQIKYLNSYFRLTDTMKVMRTEKQQAAIINTDIFYQKTPFVWGQLISLLILELGLTPSEVAGIEVANLDLNFQMLTLKTKKGVRVLPLSQILIPFLEQQLVGKEVYLFEHRGIPFSRQWFFNHLKTFVRSIGYEGLTAQKLREQFILKEKLAGKSIIELSDILGLKSPVTLEKYYKS.

One can recognise a Core-binding (CB) domain in the interval 1–72 (MKSYIEPFIA…TANQFLYYLY (72 aa)). The 164-residue stretch at 85–248 (DTMKVMRTEK…PVTLEKYYKS (164 aa)) folds into the Tyr recombinase domain. Catalysis depends on residues Lys-149 and Arg-213. The active-site O-(3'-phospho-DNA)-tyrosine intermediate is Tyr-245.

Belongs to the 'phage' integrase family. XerD-like subfamily.

The protein resides in the cytoplasm. Its function is as follows. Putative tyrosine recombinase. Not involved in the cutting and rejoining of the recombining DNA molecules on dif(SL) site. In Streptococcus pyogenes serotype M18 (strain MGAS8232), this protein is Tyrosine recombinase XerD-like.